The primary structure comprises 294 residues: Protoheme IX farnesyltransferase (294 aa).

9 helical membrane-spanning segments follow: residues Val24–Val44, Leu48–His68, Ala96–Asn116, Leu118–Leu138, Asn145–Thr165, Ala172–Ile192, Val224–Leu244, Leu245–Asp265, and Val268–Leu288.

Belongs to the UbiA prenyltransferase family. Protoheme IX farnesyltransferase subfamily.

It localises to the cell inner membrane. The enzyme catalyses heme b + (2E,6E)-farnesyl diphosphate + H2O = Fe(II)-heme o + diphosphate. It participates in porphyrin-containing compound metabolism; heme O biosynthesis; heme O from protoheme: step 1/1. Its function is as follows. Converts heme B (protoheme IX) to heme O by substitution of the vinyl group on carbon 2 of heme B porphyrin ring with a hydroxyethyl farnesyl side group. This Legionella pneumophila (strain Corby) protein is Protoheme IX farnesyltransferase.